We begin with the raw amino-acid sequence, 347 residues long: Protein-glutamate methylesterase/protein-glutamine glutaminase (347 aa).

Positions 3 to 119 constitute a Response regulatory domain; the sequence is EALVVDDSHF…STELSGHSEE (117 aa). At Asp53 the chain carries 4-aspartylphosphate. The segment at 132–154 is disordered; sequence PTAGHDVEMEPASPPDATTSEYA. Positions 152 to 346 constitute a CheB-type methylesterase domain; it reads EYADNPTLLI…EAIADSIRRT (195 aa). Catalysis depends on residues Ser164, His191, and Asp288.

It belongs to the CheB family. In terms of processing, phosphorylated by CheA. Phosphorylation of the N-terminal regulatory domain activates the methylesterase activity.

Its subcellular location is the cytoplasm. The enzyme catalyses [protein]-L-glutamate 5-O-methyl ester + H2O = L-glutamyl-[protein] + methanol + H(+). It catalyses the reaction L-glutaminyl-[protein] + H2O = L-glutamyl-[protein] + NH4(+). Involved in the modulation of the chemotaxis system; catalyzes the demethylation of specific methylglutamate residues introduced into the Htr transducer proteins (methyl-accepting chemotaxis proteins) by CheR. Also required for Htr deamidations, at least at a specific glutamine-glutamate pair in HTR-II and a specific aspartate-glutamine pair in Htr4. The chain is Protein-glutamate methylesterase/protein-glutamine glutaminase from Halobacterium salinarum (strain ATCC 29341 / DSM 671 / R1).